A 239-amino-acid chain; its full sequence is ATP-dependent dethiobiotin synthetase BioD (239 aa).

15-20 (EIGKTF) lines the ATP pocket. Thr19 is a Mg(2+) binding site. Lys40 is an active-site residue. ATP-binding positions include Asp57, 118-121 (EGVG), and 178-179 (NH). Asp57 and Glu118 together coordinate Mg(2+).

Belongs to the dethiobiotin synthetase family. Homodimer. Mg(2+) is required as a cofactor.

Its subcellular location is the cytoplasm. The enzyme catalyses (7R,8S)-7,8-diammoniononanoate + CO2 + ATP = (4R,5S)-dethiobiotin + ADP + phosphate + 3 H(+). Its pathway is cofactor biosynthesis; biotin biosynthesis; biotin from 7,8-diaminononanoate: step 1/2. Catalyzes a mechanistically unusual reaction, the ATP-dependent insertion of CO2 between the N7 and N8 nitrogen atoms of 7,8-diaminopelargonic acid (DAPA, also called 7,8-diammoniononanoate) to form a ureido ring. The polypeptide is ATP-dependent dethiobiotin synthetase BioD (Burkholderia multivorans (strain ATCC 17616 / 249)).